Consider the following 340-residue polypeptide: Putative esterase YheT (340 aa).

The 240-residue stretch at 73–312 (PRLVVFHGLE…TEHGGHVGFI (240 aa)) folds into the AB hydrolase-1 domain. Catalysis depends on charge relay system residues Ser153, Asp280, and His308.

The protein belongs to the AB hydrolase superfamily. AB hydrolase 4 family.

This is Putative esterase YheT (yheT) from Escherichia coli (strain K12).